A 454-amino-acid chain; its full sequence is Phosphoglucosamine mutase (454 aa).

Serine 104 serves as the catalytic Phosphoserine intermediate. Positions 104, 244, 246, and 248 each coordinate Mg(2+). Phosphoserine is present on serine 104.

It belongs to the phosphohexose mutase family. Mg(2+) is required as a cofactor. Activated by phosphorylation.

The catalysed reaction is alpha-D-glucosamine 1-phosphate = D-glucosamine 6-phosphate. Catalyzes the conversion of glucosamine-6-phosphate to glucosamine-1-phosphate. This Lacticaseibacillus paracasei (strain ATCC 334 / BCRC 17002 / CCUG 31169 / CIP 107868 / KCTC 3260 / NRRL B-441) (Lactobacillus paracasei) protein is Phosphoglucosamine mutase.